The sequence spans 77 residues: Putative neurotoxin 1 (77 aa).

An N-terminal signal peptide occupies residues M1 to A25. Residues K26–K46 constitute a propeptide that is removed on maturation.

The protein belongs to the scolopendra neurotoxin 3 family. In terms of processing, contains 2 disulfide bonds. In terms of tissue distribution, expressed by the venom gland.

The protein resides in the secreted. In Scolopendra subspinipes (Vietnamese centipede), this protein is Putative neurotoxin 1.